A 734-amino-acid chain; its full sequence is Photosystem I P700 chlorophyll a apoprotein A2 (734 aa).

8 helical membrane passes run 46 to 69 (IFASHFGQLAIIFLWTSGNLFHVA), 135 to 158 (LYIGALFLLFLSAVSLLGGWLHLQ), 175 to 199 (LNHHLSGLFGVSSLAWTGHLVHVAI), 273 to 291 (MAHHHLAIAFLFLIAGHMY), 330 to 353 (LHFQLGLALASLGVITSLVAQHMY), 369 to 395 (AALYTHHQYIAGFIMTGAFAHGAIFFI), 417 to 439 (AIISHLSWASLFLGFHTLGLYVH), and 517 to 535 (FLVHHAIALGLHTTTLILV). Residues Cys-559 and Cys-568 each contribute to the [4Fe-4S] cluster site. 2 helical membrane-spanning segments follow: residues 575-596 (AFYLAVFWMLNTIGWVTFYWHW) and 643-665 (LSVWAWMFLFGHLVWATGFMFLI). Positions 654, 662, and 670 each coordinate chlorophyll a. Phylloquinone is bound at residue Trp-671. The helical transmembrane segment at 707–727 (LVGLAHFSVGYIFTYAAFLIA) threads the bilayer.

It belongs to the PsaA/PsaB family. As to quaternary structure, the PsaA/B heterodimer binds the P700 chlorophyll special pair and subsequent electron acceptors. PSI consists of a core antenna complex that captures photons, and an electron transfer chain that converts photonic excitation into a charge separation. The eukaryotic PSI reaction center is composed of at least 11 subunits. Requires P700 is a chlorophyll a/chlorophyll a' dimer, A0 is one or more chlorophyll a, A1 is one or both phylloquinones and FX is a shared 4Fe-4S iron-sulfur center. as cofactor.

The protein resides in the plastid. The protein localises to the chloroplast thylakoid membrane. The catalysed reaction is reduced [plastocyanin] + hnu + oxidized [2Fe-2S]-[ferredoxin] = oxidized [plastocyanin] + reduced [2Fe-2S]-[ferredoxin]. In terms of biological role, psaA and PsaB bind P700, the primary electron donor of photosystem I (PSI), as well as the electron acceptors A0, A1 and FX. PSI is a plastocyanin-ferredoxin oxidoreductase, converting photonic excitation into a charge separation, which transfers an electron from the donor P700 chlorophyll pair to the spectroscopically characterized acceptors A0, A1, FX, FA and FB in turn. Oxidized P700 is reduced on the lumenal side of the thylakoid membrane by plastocyanin. The protein is Photosystem I P700 chlorophyll a apoprotein A2 of Populus alba (White poplar).